A 319-amino-acid chain; its full sequence is Thioredoxin reductase (319 aa).

Residues 11 to 14, 40 to 41, Gln45, Asn54, Cys145, Asp288, and 295 to 297 contribute to the FAD site; these read SGPA, IA, and RQA. A disulfide bridge links Cys142 with Cys145.

The protein belongs to the class-II pyridine nucleotide-disulfide oxidoreductase family. Homodimer. Requires FAD as cofactor.

It is found in the cytoplasm. It carries out the reaction [thioredoxin]-dithiol + NADP(+) = [thioredoxin]-disulfide + NADPH + H(+). The polypeptide is Thioredoxin reductase (TRR1) (Candida glabrata (strain ATCC 2001 / BCRC 20586 / JCM 3761 / NBRC 0622 / NRRL Y-65 / CBS 138) (Yeast)).